Reading from the N-terminus, the 117-residue chain is uncharacterized protein (117 aa).

This sequence belongs to the mimivirus R69 family.

This is an uncharacterized protein from Acanthamoeba polyphaga mimivirus (APMV).